A 328-amino-acid chain; its full sequence is Cytochrome f (328 aa).

An N-terminal signal peptide occupies residues 1-44 (MRTFNFLSFPQVHRQALVKAVLVAIATVSLLLTSDVINPQSAQA). Heme contacts are provided by Tyr-45, Cys-66, Cys-69, and His-70. A helical membrane pass occupies residues 294-314 (IKGLVLFLGGIMLCQILLVIK).

It belongs to the cytochrome f family. The 4 large subunits of the cytochrome b6-f complex are cytochrome b6, subunit IV (17 kDa polypeptide, PetD), cytochrome f and the Rieske protein, while the 4 small subunits are PetG, PetL, PetM and PetN. The complex functions as a dimer. The cofactor is heme.

The protein localises to the cellular thylakoid membrane. Component of the cytochrome b6-f complex, which mediates electron transfer between photosystem II (PSII) and photosystem I (PSI), cyclic electron flow around PSI, and state transitions. This is Cytochrome f from Microcystis aeruginosa (strain NIES-843 / IAM M-2473).